The sequence spans 253 residues: Ubiquinone biosynthesis O-methyltransferase (253 aa).

S-adenosyl-L-methionine-binding residues include Arg-47, Gly-78, Asp-99, and Met-141.

Belongs to the methyltransferase superfamily. UbiG/COQ3 family.

The catalysed reaction is a 3-demethylubiquinol + S-adenosyl-L-methionine = a ubiquinol + S-adenosyl-L-homocysteine + H(+). It catalyses the reaction a 3-(all-trans-polyprenyl)benzene-1,2-diol + S-adenosyl-L-methionine = a 2-methoxy-6-(all-trans-polyprenyl)phenol + S-adenosyl-L-homocysteine + H(+). It participates in cofactor biosynthesis; ubiquinone biosynthesis. O-methyltransferase that catalyzes the 2 O-methylation steps in the ubiquinone biosynthetic pathway. In Rhodopseudomonas palustris (strain HaA2), this protein is Ubiquinone biosynthesis O-methyltransferase.